The following is a 131-amino-acid chain: MKKTGIINSEVSAVVANMGHMDWLSIGDAGMPVPFGTKKIDLAVDKELPSFMDVLNNVLKEMKVQKIYLAEEIKDQNPAQLENIKKALPDVEVAFMPHSELKKSLTKTHAFIRTGEMTPYSNIILESGVTF.

The active-site Proton donor is the His-20. Residues Asp-28, His-98, and 120–122 contribute to the substrate site; that span reads YSN.

The protein belongs to the RbsD / FucU family. RbsD subfamily. Homodecamer.

It localises to the cytoplasm. It catalyses the reaction beta-D-ribopyranose = beta-D-ribofuranose. It participates in carbohydrate metabolism; D-ribose degradation; D-ribose 5-phosphate from beta-D-ribopyranose: step 1/2. In terms of biological role, catalyzes the interconversion of beta-pyran and beta-furan forms of D-ribose. This Limosilactobacillus reuteri (strain DSM 20016) (Lactobacillus reuteri) protein is D-ribose pyranase.